The sequence spans 177 residues: Nucleoside triphosphate/diphosphate phosphatase (177 aa).

Residue Arg-23 is the Proton donor of the active site. Mg(2+) contacts are provided by Asn-87, Asp-103, Asp-105, Asp-107, Asp-120, and Glu-123.

Belongs to the Ntdp family. Mg(2+) serves as cofactor.

It carries out the reaction a ribonucleoside 5'-triphosphate + H2O = a ribonucleoside 5'-diphosphate + phosphate + H(+). The catalysed reaction is a ribonucleoside 5'-diphosphate + H2O = a ribonucleoside 5'-phosphate + phosphate + H(+). Has nucleoside phosphatase activity towards nucleoside triphosphates and nucleoside diphosphates. The sequence is that of Nucleoside triphosphate/diphosphate phosphatase from Streptococcus pneumoniae serotype 2 (strain D39 / NCTC 7466).